The chain runs to 173 residues: MDLVVGRVVKAHGISGEVVVEIRTDDPEARFAPGAVLRGRPRSGAEREYTIESVRAHGGRLLVRLAGVADRNGADELRGTVFLVDTAELPAIDDPDEFYDHELEGMRVVTVDDAPVGKVAEVLHTAGGEILAVKADEGGREILVPFVGAIVTSVSRQNATIVIDPPEGLLDLA.

The 75-residue stretch at 95–169 (PDEFYDHELE…TIVIDPPEGL (75 aa)) folds into the PRC barrel domain.

Belongs to the RimM family. Binds ribosomal protein uS19.

The protein resides in the cytoplasm. In terms of biological role, an accessory protein needed during the final step in the assembly of 30S ribosomal subunit, possibly for assembly of the head region. Essential for efficient processing of 16S rRNA. May be needed both before and after RbfA during the maturation of 16S rRNA. It has affinity for free ribosomal 30S subunits but not for 70S ribosomes. The polypeptide is Ribosome maturation factor RimM (Mycolicibacterium smegmatis (strain ATCC 700084 / mc(2)155) (Mycobacterium smegmatis)).